The following is a 341-amino-acid chain: L-threonine 3-dehydrogenase (341 aa).

Cys38 serves as a coordination point for Zn(2+). Residues Thr40 and His43 each act as charge relay system in the active site. Positions 63, 64, 93, 96, 99, and 107 each coordinate Zn(2+). NAD(+) is bound by residues Ile175, Asp195, Arg200, 262-264, and 286-287; these read LGI and IY.

Belongs to the zinc-containing alcohol dehydrogenase family. In terms of assembly, homotetramer. Zn(2+) is required as a cofactor.

It is found in the cytoplasm. The enzyme catalyses L-threonine + NAD(+) = (2S)-2-amino-3-oxobutanoate + NADH + H(+). The protein operates within amino-acid degradation; L-threonine degradation via oxydo-reductase pathway; glycine from L-threonine: step 1/2. Catalyzes the NAD(+)-dependent oxidation of L-threonine to 2-amino-3-ketobutyrate. This is L-threonine 3-dehydrogenase from Shewanella sp. (strain ANA-3).